Consider the following 230-residue polypeptide: Probable GTP-binding protein EngB (230 aa).

An EngB-type G domain is found at 36–224 (ERPKVIVMGR…KHRINKRINI (189 aa)). GTP is bound by residues 44–51 (GRSNVGKS), 69–73 (GVTLK), 86–89 (DLPG), 166–169 (NKMD), and 201–203 (VPA). Residues Ser51 and Thr71 each coordinate Mg(2+).

Belongs to the TRAFAC class TrmE-Era-EngA-EngB-Septin-like GTPase superfamily. EngB GTPase family. Mg(2+) serves as cofactor.

Necessary for normal cell division and for the maintenance of normal septation. This Methanococcus maripaludis (strain DSM 14266 / JCM 13030 / NBRC 101832 / S2 / LL) protein is Probable GTP-binding protein EngB.